The sequence spans 80 residues: UPF0291 protein LACR_1198 (80 aa).

It belongs to the UPF0291 family.

Its subcellular location is the cytoplasm. This chain is UPF0291 protein LACR_1198, found in Lactococcus lactis subsp. cremoris (strain SK11).